The primary structure comprises 312 residues: Homoserine O-acetyltransferase (312 aa).

Cys-142 serves as the catalytic Acyl-thioester intermediate. Residues Lys-163 and Ser-192 each contribute to the substrate site. Catalysis depends on His-235, which acts as the Proton acceptor. The active site involves Glu-237. Arg-249 is a binding site for substrate.

This sequence belongs to the MetA family.

The protein resides in the cytoplasm. It carries out the reaction L-homoserine + acetyl-CoA = O-acetyl-L-homoserine + CoA. It functions in the pathway amino-acid biosynthesis; L-methionine biosynthesis via de novo pathway; O-acetyl-L-homoserine from L-homoserine: step 1/1. Its function is as follows. Transfers an acetyl group from acetyl-CoA to L-homoserine, forming acetyl-L-homoserine. The chain is Homoserine O-acetyltransferase from Chelativorans sp. (strain BNC1).